The sequence spans 404 residues: Mitochondrial intermembrane space import and assembly protein 40 (404 aa).

The N-terminal 34 residues, 1–34, are a transit peptide targeting the mitochondrion; that stretch reads MVSAVSRQLVNRQLNRVLLRNARIAPFARATRFY. Residues 35–50 are Mitochondrial matrix-facing; it reads SSKYAQESENAKRHKM. A helical; Signal-anchor for type II membrane protein membrane pass occupies residues 51-71; it reads GLLIAGVAVAGAIVFVTPPQW. Residues 72–404 lie on the Mitochondrial intermembrane side of the membrane; that stretch reads KKYFRAAKKV…PDEDTASKKD (333 aa). The disordered stretch occupies residues 84–287; sequence VAESKEDPVS…SAYNPDTGEI (204 aa). Residues 101–113 are compositionally biased toward low complexity; that stretch reads ESVQESTEEPQQS. Polar residues predominate over residues 124–135; sequence EQAQDESASSGD. Basic and acidic residues-rich tracts occupy residues 136–156, 226–237, and 246–276; these read SEAK…EKES, EEDKTPKAEELK, and EEPK…EVKQ. 3 disulfide bridges follow: cysteine 291/cysteine 293, cysteine 302/cysteine 335, and cysteine 312/cysteine 325. A CHCH domain is found at 299-343; that stretch reads HGPCGEEFKAAFSCFVYSEAEPKGIDCVEKFQHMQDCFRRYPEHY. Short sequence motifs (cx9C motif) lie at residues 302–312 and 325–335; these read CGEEFKAAFSC and CVEKFQHMQDC. Residues 346-404 form a disordered region; the sequence is QLADPADDENVDHEKNLSEGKDTGVDSTPPKDEAYLKTEKEKKIEENASPDEDTASKKD. Residues 357-391 are compositionally biased toward basic and acidic residues; sequence DHEKNLSEGKDTGVDSTPPKDEAYLKTEKEKKIEE.

As to quaternary structure, monomer. It depends on Cu(2+) as a cofactor. Requires Zn(2+) as cofactor.

The protein localises to the mitochondrion inner membrane. Its function is as follows. Required for the import and folding of small cysteine-containing proteins (small Tim) in the mitochondrial intermembrane space (IMS). Forms a redox cycle with ERV1 that involves a disulfide relay system. Precursor proteins to be imported into the IMS are translocated in their reduced form into the mitochondria. The oxidized form of MIA40 forms a transient intermolecular disulfide bridge with the reduced precursor protein, resulting in oxidation of the precursor protein that now contains an intramolecular disulfide bond and is able to undergo folding in the IMS. The polypeptide is Mitochondrial intermembrane space import and assembly protein 40 (MIA40) (Candida glabrata (strain ATCC 2001 / BCRC 20586 / JCM 3761 / NBRC 0622 / NRRL Y-65 / CBS 138) (Yeast)).